A 178-amino-acid polypeptide reads, in one-letter code: Inorganic pyrophosphatase (178 aa).

Substrate-binding residues include K30, R44, and Y56. Mg(2+)-binding residues include D66, D71, and D103. Residue Y142 participates in substrate binding.

Belongs to the PPase family. In terms of assembly, homohexamer. Mg(2+) serves as cofactor.

The protein resides in the cytoplasm. It carries out the reaction diphosphate + H2O = 2 phosphate + H(+). Its function is as follows. Catalyzes the hydrolysis of inorganic pyrophosphate (PPi) forming two phosphate ions. This Xanthomonas axonopodis pv. citri (strain 306) protein is Inorganic pyrophosphatase.